Here is a 261-residue protein sequence, read N- to C-terminus: Intermembrane phospholipid transport system permease protein MlaE (261 aa).

At 1–12 (MIVNFISALGKQ) the chain is on the cytoplasmic side. Residues 13–33 (VIDFFRALGRAGFMLFGALIG) traverse the membrane as a helical segment. The Periplasmic portion of the chain corresponds to 34–49 (KPQIRKHFPLLVKQMH). A helical membrane pass occupies residues 50–70 (VLGVQSLLIILLSGLFIGMVL). Topologically, residues 71–147 (GLQGYVVLID…DPLRRVIAPR (77 aa)) are cytoplasmic. The chain crosses the membrane as a helical span at residues 148–168 (FWAGVISMPVLSILFIAIGIW). Residues 169 to 198 (GGSLVGVDWKGVDSGSFWSVMQNSVSWSYD) are Periplasmic-facing. A helical membrane pass occupies residues 199 to 219 (ILNGFIKAVFFAVAVTWIALF). The Cytoplasmic portion of the chain corresponds to 220 to 238 (NGYDCMPTSEGISQATTRT). Residues 239–259 (VVHASLVVLGLDFILTAIMFG) form a helical membrane-spanning segment. Over 260–261 (AG) the chain is Periplasmic.

The protein belongs to the MlaE permease family. As to quaternary structure, the complex is composed of two ATP-binding proteins (MlaF), two transmembrane proteins (MlaE), two cytoplasmic solute-binding proteins (MlaB) and six periplasmic solute-binding proteins (MlaD).

Its subcellular location is the cell inner membrane. Functionally, part of the ABC transporter complex MlaFEDB, which is involved in a phospholipid transport pathway that maintains lipid asymmetry in the outer membrane by retrograde trafficking of phospholipids from the outer membrane to the inner membrane. Probably responsible for the translocation of the substrate across the membrane. The protein is Intermembrane phospholipid transport system permease protein MlaE of Haemophilus influenzae (strain ATCC 51907 / DSM 11121 / KW20 / Rd).